The sequence spans 259 residues: Large ribosomal subunit protein eL8 (259 aa).

The interval 1–24 is disordered; it reads MAPKSKKVAPSPFAQPKAAKTTKN. Phosphoserine occurs at positions 11 and 33.

The protein belongs to the eukaryotic ribosomal protein eL8 family. Component of the large ribosomal subunit (LSU). Mature yeast ribosomes consist of a small (40S) and a large (60S) subunit. The 40S small subunit contains 1 molecule of ribosomal RNA (18S rRNA) and at least 33 different proteins. The large 60S subunit contains 3 rRNA molecules (25S, 5.8S and 5S rRNA) and at least 46 different proteins.

It is found in the cytoplasm. In terms of biological role, component of the ribosome, a large ribonucleoprotein complex responsible for the synthesis of proteins in the cell. The small ribosomal subunit (SSU) binds messenger RNAs (mRNAs) and translates the encoded message by selecting cognate aminoacyl-transfer RNA (tRNA) molecules. The large subunit (LSU) contains the ribosomal catalytic site termed the peptidyl transferase center (PTC), which catalyzes the formation of peptide bonds, thereby polymerizing the amino acids delivered by tRNAs into a polypeptide chain. The nascent polypeptides leave the ribosome through a tunnel in the LSU and interact with protein factors that function in enzymatic processing, targeting, and the membrane insertion of nascent chains at the exit of the ribosomal tunnel. In Schizosaccharomyces pombe (strain 972 / ATCC 24843) (Fission yeast), this protein is Large ribosomal subunit protein eL8 (rpl8).